Here is a 767-residue protein sequence, read N- to C-terminus: DNA topoisomerase 1 (767 aa).

Over residues M1–K23 the composition is skewed to basic and acidic residues. A disordered region spans residues M1–E201. At S2 the chain carries N-acetylserine. A phosphoserine mark is found at S2 and S10. The segment covering H24–K39 has biased composition (basic residues). Basic and acidic residues predominate over residues K40–N110. S59 carries the phosphoserine modification. K103 participates in a covalent cross-link: Glycyl lysine isopeptide (Lys-Gly) (interchain with G-Cter in SUMO2). Residue K105 forms a Glycyl lysine isopeptide (Lys-Gly) (interchain with G-Cter in SUMO); alternate linkage. K105 participates in a covalent cross-link: Glycyl lysine isopeptide (Lys-Gly) (interchain with G-Cter in SUMO2); alternate. S114 carries the post-translational modification Phosphoserine. Residue K119 forms a Glycyl lysine isopeptide (Lys-Gly) (interchain with G-Cter in SUMO); alternate linkage. K119 is covalently cross-linked (Glycyl lysine isopeptide (Lys-Gly) (interchain with G-Cter in SUMO2); alternate). Residue K119 forms a Glycyl lysine isopeptide (Lys-Gly) (interchain with G-Cter in SUMO1); alternate linkage. Positions P131–E168 are enriched in basic and acidic residues. Glycyl lysine isopeptide (Lys-Gly) (interchain with G-Cter in SUMO2) cross-links involve residues K136 and K150. K155 participates in a covalent cross-link: Glycyl lysine isopeptide (Lys-Gly) (interchain with G-Cter in SUMO); alternate. K155 is covalently cross-linked (Glycyl lysine isopeptide (Lys-Gly) (interchain with G-Cter in SUMO2); alternate). Glycyl lysine isopeptide (Lys-Gly) (interchain with G-Cter in SUMO2) cross-links involve residues K160 and K166. K174 participates in a covalent cross-link: Glycyl lysine isopeptide (Lys-Gly) (interchain with G-Cter in SUMO2); alternate. Position 174 is an N6-acetyllysine; alternate (K174). The segment covering K181 to E201 has biased composition (basic and acidic residues). Residue K206 forms a Glycyl lysine isopeptide (Lys-Gly) (interchain with G-Cter in SUMO2) linkage. Residue K282 is modified to N6-acetyllysine. K338 is covalently cross-linked (Glycyl lysine isopeptide (Lys-Gly) (interchain with G-Cter in SUMO2)). Interaction with DNA regions lie at residues K427–Y428 and R490–K495. Residues S434–F767 form the Topo IB-type catalytic domain. Position 508 is a phosphoserine; by CK2 (S508). K551 participates in a covalent cross-link: Glycyl lysine isopeptide (Lys-Gly) (interchain with G-Cter in SUMO2). Positions T587–K589 are interaction with DNA. Residues K644, K702, and K714 each participate in a glycyl lysine isopeptide (Lys-Gly) (interchain with G-Cter in SUMO2) cross-link. Catalysis depends on Y725, which acts as the O-(3'-phospho-DNA)-tyrosine intermediate.

This sequence belongs to the type IB topoisomerase family. As to quaternary structure, monomer. Interacts with ERCC6. Interacts with TPRN; TPRN interacts with a number of DNA damage response proteins, is recruited to sites of DNA damage and may play a role in DNA damage repair. In terms of processing, sumoylated. Lys-119 is the main site of sumoylation. Sumoylation plays a role in partitioning TOP1 between nucleoli and nucleoplasm. Levels are dramatically increased on camptothecin (CPT) treatment. Phosphorylation at Ser-508 by CK2 increases binding to supercoiled DNA and sensitivity to camptothecin.

It is found in the nucleus. It localises to the nucleolus. The protein localises to the nucleoplasm. The enzyme catalyses ATP-independent breakage of single-stranded DNA, followed by passage and rejoining.. With respect to regulation, specifically inhibited by camptothecin (CPT), a plant alkaloid with antitumor activity. Functionally, releases the supercoiling and torsional tension of DNA introduced during the DNA replication and transcription by transiently cleaving and rejoining one strand of the DNA duplex. Introduces a single-strand break via transesterification at a target site in duplex DNA. The scissile phosphodiester is attacked by the catalytic tyrosine of the enzyme, resulting in the formation of a DNA-(3'-phosphotyrosyl)-enzyme intermediate and the expulsion of a 5'-OH DNA strand. The free DNA strand then rotates around the intact phosphodiester bond on the opposing strand, thus removing DNA supercoils. Finally, in the religation step, the DNA 5'-OH attacks the covalent intermediate to expel the active-site tyrosine and restore the DNA phosphodiester backbone. Regulates the alternative splicing of tissue factor (F3) pre-mRNA in endothelial cells. Involved in the circadian transcription of the core circadian clock component BMAL1 by altering the chromatin structure around the ROR response elements (ROREs) on the BMAL1 promoter. The polypeptide is DNA topoisomerase 1 (TOP1) (Cricetulus griseus (Chinese hamster)).